Here is a 247-residue protein sequence, read N- to C-terminus: NAD(P)H-quinone oxidoreductase subunit K (247 aa).

Cys-63, Cys-64, Cys-128, and Cys-159 together coordinate [4Fe-4S] cluster.

The protein belongs to the complex I 20 kDa subunit family. In terms of assembly, NDH-1 can be composed of about 15 different subunits; different subcomplexes with different compositions have been identified which probably have different functions. [4Fe-4S] cluster serves as cofactor.

It is found in the cellular thylakoid membrane. The enzyme catalyses a plastoquinone + NADH + (n+1) H(+)(in) = a plastoquinol + NAD(+) + n H(+)(out). The catalysed reaction is a plastoquinone + NADPH + (n+1) H(+)(in) = a plastoquinol + NADP(+) + n H(+)(out). Its function is as follows. NDH-1 shuttles electrons from an unknown electron donor, via FMN and iron-sulfur (Fe-S) centers, to quinones in the respiratory and/or the photosynthetic chain. The immediate electron acceptor for the enzyme in this species is believed to be plastoquinone. Couples the redox reaction to proton translocation, and thus conserves the redox energy in a proton gradient. Cyanobacterial NDH-1 also plays a role in inorganic carbon-concentration. The chain is NAD(P)H-quinone oxidoreductase subunit K from Gloeothece citriformis (strain PCC 7424) (Cyanothece sp. (strain PCC 7424)).